Here is a 412-residue protein sequence, read N- to C-terminus: Alpha-1-antiproteinase (412 aa).

The first 24 residues, 1–24 (MPSSISWGLLLLAGLCCLAPGSLA), serve as a signal peptide directing secretion. Ser-33 is modified (phosphoserine). N-linked (GlcNAc...) asparagine glycosylation is found at Asn-65, Asn-102, Asn-165, and Asn-266. Residues 368-387 (GVTVLEAIPMSLPPDVRFDR) form an RCL region. Ser-378 is modified (phosphoserine).

This sequence belongs to the serpin family. In terms of assembly, interacts with CELA2A. Interacts with ERGIC3 and LMAN1/ERGIC53. Interacts with PRSS1/Trypsin. In terms of tissue distribution, plasma.

It localises to the secreted. Its function is as follows. Inhibitor of serine proteases. The polypeptide is Alpha-1-antiproteinase (Callosciurus caniceps (Gray-bellied squirrel)).